The chain runs to 576 residues: Zinc finger protein 791 (576 aa).

The region spanning 4 to 90 (VAFEDVSVSF…AENFSPNLSV (87 aa)) is the KRAB domain. 17 C2H2-type zinc fingers span residues 100 to 122 (YECTICGKAFMRLSSLTRHMRSH), 132 to 154 (YKCKECEKAFSYLKSFQRHERSH), 160 to 182 (YKCKQCGKTFIYHQPFQRHERTH), 188 to 210 (YECKQCGKALSCSSSLRVHERIH), 216 to 238 (YECKQCGKAFSCSSSIRVHERTH), 244 to 266 (YACKECGKAFISHTSVLTHMITH), 272 to 294 (YKCKECGKAFIFPSFLRVHERIH), 300 to 322 (YKCKQCGKAFRCSTSIQIHERIH), 328 to 350 (YKCKECGKSFSARPAFRVHVRVH), 356 to 378 (YKCKECGKAFSRISYFRIHERTH), 384 to 406 (YECKKCGKTFNYPLDLKIHKRNH), 412 to 434 (YECKECAKTFISLENFRRHMITH), 440 to 462 (YKCRDCGKVFIFPSALRTHERTH), 468 to 490 (YECKQCGKAFSCSSYIRIHKRTH), 496 to 518 (YECKECGKAFIYPTSFQGHMRMH), 524 to 546 (YKCKECGKAFSLHSSFQRHTRIH), and 552 to 574 (LECKQCGKAFSVSTSLKKHMRMH).

It belongs to the krueppel C2H2-type zinc-finger protein family.

It is found in the nucleus. May be involved in transcriptional regulation. In Homo sapiens (Human), this protein is Zinc finger protein 791 (ZNF791).